The following is a 290-amino-acid chain: Acetylglutamate kinase (290 aa).

Residues 65-66, R87, and N186 each bind substrate; that span reads GG.

It belongs to the acetylglutamate kinase family. ArgB subfamily.

It localises to the cytoplasm. It carries out the reaction N-acetyl-L-glutamate + ATP = N-acetyl-L-glutamyl 5-phosphate + ADP. It functions in the pathway amino-acid biosynthesis; L-arginine biosynthesis; N(2)-acetyl-L-ornithine from L-glutamate: step 2/4. Its function is as follows. Catalyzes the ATP-dependent phosphorylation of N-acetyl-L-glutamate. This is Acetylglutamate kinase from Mycobacterium sp. (strain JLS).